The primary structure comprises 114 residues: Ribonuclease P protein component (114 aa).

Belongs to the RnpA family. As to quaternary structure, consists of a catalytic RNA component (M1 or rnpB) and a protein subunit.

The enzyme catalyses Endonucleolytic cleavage of RNA, removing 5'-extranucleotides from tRNA precursor.. Its function is as follows. RNaseP catalyzes the removal of the 5'-leader sequence from pre-tRNA to produce the mature 5'-terminus. It can also cleave other RNA substrates such as 4.5S RNA. The protein component plays an auxiliary but essential role in vivo by binding to the 5'-leader sequence and broadening the substrate specificity of the ribozyme. In Buchnera aphidicola subsp. Schizaphis graminum (strain Sg), this protein is Ribonuclease P protein component.